The following is a 403-amino-acid chain: MDKLSIRDLSLEGKKVLVRVDFNVPIKDGKILDDVRIRSAMPTIHYLLKQDAAVILVSHLGRPKGGVFEEAYSLAPIVPVLEGYLGHHVPLSPDCIGEVARQAVAQLSPGRVLLLENVRFHKGEEHPDEDPSFAIELAAYADFYVNDAFGTSHRKHASVYRVPQLFPDRAAAGFLMEKELEFLGQHLLVEPKRPFTAILGGAKMSSKIGVIEALLSCVDHLVLAGGMGYTFLRAINRQVGNSLVEESGIPLAKKVLEKAQALGVKIHLPVDAKVAKQCDSGEDWRELSIQEGIPEGLAGFDIGAQTIELFSKVIQESATIFWNGPVGVYEVPPFDQGSKAIAQCLASHSSAVTVVGGGDAAAVVALAGCASQISHVSTGGGASLEFLEKSSLPGTEILSPAQS.

Residues 21-23, Arg-36, 59-62, Arg-119, and Arg-154 each bind substrate; these read DFN and HLGR. Residues Lys-207, Gly-299, Glu-330, and 357-360 each bind ATP; that span reads GGDA.

Belongs to the phosphoglycerate kinase family. In terms of assembly, monomer.

It localises to the cytoplasm. It carries out the reaction (2R)-3-phosphoglycerate + ATP = (2R)-3-phospho-glyceroyl phosphate + ADP. The protein operates within carbohydrate degradation; glycolysis; pyruvate from D-glyceraldehyde 3-phosphate: step 2/5. This is Phosphoglycerate kinase from Chlamydia trachomatis serovar A (strain ATCC VR-571B / DSM 19440 / HAR-13).